We begin with the raw amino-acid sequence, 1407 residues long: YEATS domain-containing protein 2 (1407 aa).

Lys-9 is covalently cross-linked (Glycyl lysine isopeptide (Lys-Gly) (interchain with G-Cter in SUMO2)). Residues 54–80 are a coiled coil; the sequence is MKNKEHEIDVIDQRLIEARRMMDKLRA. Residue Lys-113 forms a Glycyl lysine isopeptide (Lys-Gly) (interchain with G-Cter in SUMO2) linkage. Positions 116-196 are disordered; that stretch reads LESPSRSSSP…SHKRELRNAD (81 aa). Phosphoserine is present on residues Ser-118, Ser-120, and Ser-157. Residues 119–148 show a composition bias toward polar residues; it reads PSRSSSPTNQRSETPSANHSESDSLSQHND. Over residues 149 to 165 the composition is skewed to basic and acidic residues; the sequence is FLSDKDNNSNVDVEERP. Lys-189 is covalently cross-linked (Glycyl lysine isopeptide (Lys-Gly) (interchain with G-Cter in SUMO2)). The YEATS domain occupies 201–346; sequence ETSRLFVKKT…EDSVYPQSSE (146 aa). Histone H3K27cr binding stretches follow at residues 260–262 and 283–285; these read HPS and WGE. Thr-406 bears the Phosphothreonine mark. Phosphoserine occurs at positions 446, 462, 464, 470, and 472. The interval 462 to 540 is disordered; it reads SGSPISTPSP…GTGSPIPKIH (79 aa). Phosphothreonine is present on Thr-477. Lys-486 participates in a covalent cross-link: Glycyl lysine isopeptide (Lys-Gly) (interchain with G-Cter in SUMO2). Low complexity predominate over residues 511–520; the sequence is STPSTGSPTS. Residue Ser-534 is modified to Phosphoserine. Lys-550 is covalently cross-linked (Glycyl lysine isopeptide (Lys-Gly) (interchain with G-Cter in SUMO2)). Ser-573 is modified (phosphoserine). A Glycyl lysine isopeptide (Lys-Gly) (interchain with G-Cter in SUMO2) cross-link involves residue Lys-590. At Ser-625 the chain carries Phosphoserine. Residues Lys-647 and Lys-771 each participate in a glycyl lysine isopeptide (Lys-Gly) (interchain with G-Cter in SUMO2) cross-link. The disordered stretch occupies residues 791–833; sequence SGSAAAGGSGSSGAGGGSGGGGGSGAGGTPSTSGPGGGPQHLT. The segment covering 795-829 has biased composition (gly residues); the sequence is AAGGSGSSGAGGGSGGGGGSGAGGTPSTSGPGGGP. A Glycyl lysine isopeptide (Lys-Gly) (interchain with G-Cter in SUMO2) cross-link involves residue Lys-908. Lys-1095 participates in a covalent cross-link: Glycyl lysine isopeptide (Lys-Gly) (interchain with G-Cter in SUMO1); alternate. Residue Lys-1095 forms a Glycyl lysine isopeptide (Lys-Gly) (interchain with G-Cter in SUMO2); alternate linkage. Lys-1115 is covalently cross-linked (Glycyl lysine isopeptide (Lys-Gly) (interchain with G-Cter in SUMO2)). Thr-1204 bears the Phosphothreonine mark. Glycyl lysine isopeptide (Lys-Gly) (interchain with G-Cter in SUMO2) cross-links involve residues Lys-1207 and Lys-1270.

As to quaternary structure, component of the ADA2A-containing complex (ATAC), composed of KAT14, KAT2A, TADA2L, TADA3L, ZZ3, MBIP, WDR5, YEATS2, SGF29 and DR1.

It localises to the nucleus. In terms of biological role, chromatin reader component of the ATAC complex, a complex with histone acetyltransferase activity on histones H3 and H4. YEATS2 specifically recognizes and binds histone H3 crotonylated at 'Lys-27' (H3K27cr). Crotonylation marks active promoters and enhancers and confers resistance to transcriptional repressors. The protein is YEATS domain-containing protein 2 of Mus musculus (Mouse).